A 477-amino-acid chain; its full sequence is Ubiquitin carboxyl-terminal hydrolase 7 (477 aa).

Residues 2–77 (LTVSVKWQKK…LMMMGTADEI (76 aa)) form the Ubiquitin-like domain. In terms of domain architecture, USP spans 104 to 473 (AGLVNLGNTC…MAYIVMYKAR (370 aa)). Cysteine 113 functions as the Nucleophile in the catalytic mechanism. The interval 171–190 (MPFWMVLQKKYPQFAQLHNG) is calmodulin-binding. Positions 364 to 401 (QASAKSSSKGDDVKMTDAEGSSNQSGESSTGDQQEGAS) are disordered. Residues 371–380 (SKGDDVKMTD) show a composition bias toward basic and acidic residues. Residues 382–399 (EGSSNQSGESSTGDQQEG) are compositionally biased toward polar residues. Histidine 425 serves as the catalytic Proton acceptor.

Belongs to the peptidase C19 family. In terms of assembly, interacts with calmodulin (CaM).

It carries out the reaction Thiol-dependent hydrolysis of ester, thioester, amide, peptide and isopeptide bonds formed by the C-terminal Gly of ubiquitin (a 76-residue protein attached to proteins as an intracellular targeting signal).. Its function is as follows. Recognizes and hydrolyzes the peptide bond at the C-terminal Gly of ubiquitin. Involved in the processing of poly-ubiquitin precursors as well as that of ubiquitinated proteins. This chain is Ubiquitin carboxyl-terminal hydrolase 7 (UBP7), found in Arabidopsis thaliana (Mouse-ear cress).